Consider the following 376-residue polypeptide: Biotin synthase (376 aa).

The Radical SAM core domain occupies 68–292 (NEVQISTLLS…IAVTRICCPS (225 aa)). [4Fe-4S] cluster is bound by residues cysteine 83, cysteine 87, and cysteine 90. 4 residues coordinate [2Fe-2S] cluster: cysteine 129, cysteine 160, cysteine 220, and arginine 296.

Belongs to the radical SAM superfamily. Biotin synthase family. As to quaternary structure, homodimer. Requires [4Fe-4S] cluster as cofactor. It depends on [2Fe-2S] cluster as a cofactor.

The enzyme catalyses (4R,5S)-dethiobiotin + (sulfur carrier)-SH + 2 reduced [2Fe-2S]-[ferredoxin] + 2 S-adenosyl-L-methionine = (sulfur carrier)-H + biotin + 2 5'-deoxyadenosine + 2 L-methionine + 2 oxidized [2Fe-2S]-[ferredoxin]. It functions in the pathway cofactor biosynthesis; biotin biosynthesis; biotin from 7,8-diaminononanoate: step 2/2. Functionally, catalyzes the conversion of dethiobiotin (DTB) to biotin by the insertion of a sulfur atom into dethiobiotin via a radical-based mechanism. This Psychrobacter cryohalolentis (strain ATCC BAA-1226 / DSM 17306 / VKM B-2378 / K5) protein is Biotin synthase.